Reading from the N-terminus, the 447-residue chain is Tektin-4 (447 aa).

Coiled-coil stretches lie at residues 114-143 (KSELQREIDELSSETDQMMAQKLRLQRALD), 324-348 (KILSEITDQEHQIAALKQAIKDKEA), and 375-423 (FRLM…TNSL).

Belongs to the tektin family. Microtubule inner protein component of sperm flagellar doublet microtubules. In terms of processing, ubiquitinated, leading to its degradation. Deubiquitinated by USP16, promoting its stability.

It localises to the cytoplasm. Its subcellular location is the cytoskeleton. It is found in the cilium axoneme. The protein resides in the flagellum axoneme. Microtubule inner protein (MIP) part of the dynein-decorated doublet microtubules (DMTs) in cilia and flagellar axoneme. Forms filamentous polymers in the walls of ciliary and flagellar microtubules. Contributes to normal sperm motility. This chain is Tektin-4 (Tekt4), found in Rattus norvegicus (Rat).